Reading from the N-terminus, the 188-residue chain is Urease accessory protein UreE (188 aa).

The interval alanine 142–serine 174 is disordered. Residues histidine 157–alanine 172 show a composition bias toward basic and acidic residues.

It belongs to the UreE family.

The protein resides in the cytoplasm. Functionally, involved in urease metallocenter assembly. Binds nickel. Probably functions as a nickel donor during metallocenter assembly. The protein is Urease accessory protein UreE of Tolumonas auensis (strain DSM 9187 / NBRC 110442 / TA 4).